Consider the following 250-residue polypeptide: Pyrroloquinoline-quinone synthase (250 aa).

Belongs to the PqqC family.

The enzyme catalyses 6-(2-amino-2-carboxyethyl)-7,8-dioxo-1,2,3,4,7,8-hexahydroquinoline-2,4-dicarboxylate + 3 O2 = pyrroloquinoline quinone + 2 H2O2 + 2 H2O + H(+). It functions in the pathway cofactor biosynthesis; pyrroloquinoline quinone biosynthesis. Functionally, ring cyclization and eight-electron oxidation of 3a-(2-amino-2-carboxyethyl)-4,5-dioxo-4,5,6,7,8,9-hexahydroquinoline-7,9-dicarboxylic-acid to PQQ. The polypeptide is Pyrroloquinoline-quinone synthase (Xanthomonas oryzae pv. oryzae (strain MAFF 311018)).